The primary structure comprises 124 residues: Small ribosomal subunit protein uS12 (124 aa).

Asp-89 carries the post-translational modification 3-methylthioaspartic acid. Positions 102-124 are disordered; the sequence is LDTSGVNNRKHGRSKYGTKRPKS. Positions 109 to 124 are enriched in basic residues; that stretch reads NRKHGRSKYGTKRPKS.

The protein belongs to the universal ribosomal protein uS12 family. As to quaternary structure, part of the 30S ribosomal subunit. Contacts proteins S8 and S17. May interact with IF1 in the 30S initiation complex.

Functionally, with S4 and S5 plays an important role in translational accuracy. Its function is as follows. Interacts with and stabilizes bases of the 16S rRNA that are involved in tRNA selection in the A site and with the mRNA backbone. Located at the interface of the 30S and 50S subunits, it traverses the body of the 30S subunit contacting proteins on the other side and probably holding the rRNA structure together. The combined cluster of proteins S8, S12 and S17 appears to hold together the shoulder and platform of the 30S subunit. The sequence is that of Small ribosomal subunit protein uS12 from Francisella tularensis subsp. tularensis (strain FSC 198).